The following is a 231-amino-acid chain: LexA repressor (231 aa).

Positions Phe-26 to Thr-46 form a DNA-binding region, H-T-H motif. Residues Ser-152 and Lys-190 each act as for autocatalytic cleavage activity in the active site.

The protein belongs to the peptidase S24 family. As to quaternary structure, homodimer.

It catalyses the reaction Hydrolysis of Ala-|-Gly bond in repressor LexA.. Its function is as follows. Represses a number of genes involved in the response to DNA damage (SOS response), including recA and lexA. In the presence of single-stranded DNA, RecA interacts with LexA causing an autocatalytic cleavage which disrupts the DNA-binding part of LexA, leading to derepression of the SOS regulon and eventually DNA repair. The sequence is that of LexA repressor from Bradyrhizobium diazoefficiens (strain JCM 10833 / BCRC 13528 / IAM 13628 / NBRC 14792 / USDA 110).